A 344-amino-acid polypeptide reads, in one-letter code: tRNA N6-adenosine threonylcarbamoyltransferase (344 aa).

Fe cation is bound by residues histidine 114 and histidine 118. Residues 136 to 140 (LVSGG), aspartate 170, glycine 183, aspartate 187, and asparagine 278 contribute to the substrate site. Aspartate 306 contacts Fe cation.

This sequence belongs to the KAE1 / TsaD family. Requires Fe(2+) as cofactor.

Its subcellular location is the cytoplasm. The enzyme catalyses L-threonylcarbamoyladenylate + adenosine(37) in tRNA = N(6)-L-threonylcarbamoyladenosine(37) in tRNA + AMP + H(+). Its function is as follows. Required for the formation of a threonylcarbamoyl group on adenosine at position 37 (t(6)A37) in tRNAs that read codons beginning with adenine. Is involved in the transfer of the threonylcarbamoyl moiety of threonylcarbamoyl-AMP (TC-AMP) to the N6 group of A37, together with TsaE and TsaB. TsaD likely plays a direct catalytic role in this reaction. The chain is tRNA N6-adenosine threonylcarbamoyltransferase from Mycobacteroides abscessus (strain ATCC 19977 / DSM 44196 / CCUG 20993 / CIP 104536 / JCM 13569 / NCTC 13031 / TMC 1543 / L948) (Mycobacterium abscessus).